A 131-amino-acid chain; its full sequence is Small ribosomal subunit protein bS6 (131 aa).

The segment at 98–131 is disordered; sequence EASPMVKAKDERRERREDFANETSEETEAGDSEE. The segment covering 104–116 has biased composition (basic and acidic residues); sequence KAKDERRERREDF. Positions 120–131 are enriched in acidic residues; sequence TSEETEAGDSEE.

Belongs to the bacterial ribosomal protein bS6 family.

In terms of biological role, binds together with bS18 to 16S ribosomal RNA. The sequence is that of Small ribosomal subunit protein bS6 from Edwardsiella ictaluri (strain 93-146).